The chain runs to 396 residues: Elongation factor Tu (396 aa).

The tr-type G domain occupies 10 to 205 (KPHVNIGTIG…AVDESIPDPV (196 aa)). The G1 stretch occupies residues 19–26 (GHVDHGKT). 19 to 26 (GHVDHGKT) contacts GTP. T26 lines the Mg(2+) pocket. The G2 stretch occupies residues 62–66 (GITIN). Residues 83–86 (DAPG) form a G3 region. Residues 83–87 (DAPGH) and 138–141 (NKAD) contribute to the GTP site. Residues 138–141 (NKAD) are G4. Positions 175 to 177 (SAL) are G5.

It belongs to the TRAFAC class translation factor GTPase superfamily. Classic translation factor GTPase family. EF-Tu/EF-1A subfamily. In terms of assembly, monomer.

Its subcellular location is the cytoplasm. The enzyme catalyses GTP + H2O = GDP + phosphate + H(+). GTP hydrolase that promotes the GTP-dependent binding of aminoacyl-tRNA to the A-site of ribosomes during protein biosynthesis. This is Elongation factor Tu from Rhodococcus jostii (strain RHA1).